A 1381-amino-acid chain; its full sequence is Hepatocyte growth factor receptor (1381 aa).

Positions 1–24 (MKAPAVLAPGILVLLFTLVQKSKG) are cleaved as a signal peptide. Residues 25-932 (ECKEALVKST…VIVQPDQNFT (908 aa)) lie on the Extracellular side of the membrane. The region spanning 27 to 515 (KEALVKSTMN…TGKKITKIPL (489 aa)) is the Sema domain. A glycan (N-linked (GlcNAc...) asparagine) is linked at Asn45. Disulfide bonds link Cys95–Cys101, Cys98–Cys160, Cys133–Cys141, and Cys173–Cys176. The N-linked (GlcNAc...) asparagine glycan is linked to Asn106. Residues Asn203 and Asn359 are each glycosylated (N-linked (GlcNAc...) asparagine). Disulfide bonds link Cys299–Cys364 and Cys386–Cys398. N-linked (GlcNAc...) asparagine glycans are attached at residues Asn400 and Asn406. Disulfide bonds link Cys520/Cys538, Cys526/Cys561, Cys529/Cys545, and Cys541/Cys551. 3 IPT/TIG domains span residues 563–655 (PTVY…FSYV), 657–739 (PVIT…FTYR), and 742–836 (PIVY…LIYV). An O-linked (Man) threonine glycan is attached at Thr582. Asn607 and Asn635 each carry an N-linked (GlcNAc...) asparagine glycan. Residues Thr676 and Thr761 are each glycosylated (O-linked (Man) threonine). N-linked (GlcNAc...) asparagine glycosylation is found at Asn785, Asn879, and Asn930. Residues 933 to 955 (GLIVGVVSISIILLLLLGLFLWL) traverse the membrane as a helical segment. Residues 956 to 1381 (KKRKQIKDLG…QDNVDGEGDT (426 aa)) lie on the Cytoplasmic side of the membrane. Ser966 carries the post-translational modification Phosphoserine. Phosphothreonine is present on Thr977. Residues Ser990 and Ser997 each carry the phosphoserine modification. At Tyr1003 the chain carries Phosphotyrosine. The region spanning 1078–1345 (VHFNEVIGRG…RISAIFSTFI (268 aa)) is the Protein kinase domain. ATP is bound by residues 1084-1092 (IGRGHFGCV) and Lys1110. Asp1204 functions as the Proton acceptor in the catalytic mechanism. Residues 1212 to 1381 (LDEKFTVKVA…QDNVDGEGDT (170 aa)) form an interaction with RANBP9 region. The residue at position 1230 (Tyr1230) is a Phosphotyrosine. Residues Tyr1234 and Tyr1235 each carry the phosphotyrosine; by autocatalysis modification. Thr1289 carries the post-translational modification Phosphothreonine. The interval 1320-1359 (WHPRAELRPSFSELVSRISAIFSTFIGEHYVHVNATYVNV) is interaction with MUC20. Residues Tyr1349 and Tyr1356 each carry the phosphotyrosine; by autocatalysis modification. A Phosphotyrosine modification is found at Tyr1365.

This sequence belongs to the protein kinase superfamily. Tyr protein kinase family. In terms of assembly, heterodimer made of an alpha chain (50 kDa) and a beta chain (145 kDa) which are disulfide linked. Binds PLXNB1. Interacts when phosphorylated with downstream effectors including STAT3, PIK3R1, SRC, PCLG1, GRB2 and GAB1. Interacts with SPSB1, SPSB2 and SPSB4. Interacts with INPP5D/SHIP1. When phosphorylated at Tyr-1356, interacts with INPPL1/SHIP2. Interacts with RANBP9 and RANBP10, as well as SPSB1, SPSB2, SPSB3 and SPSB4. SPSB1 binding occurs in the presence and in the absence of HGF, however HGF treatment has a positive effect on this interaction. Interacts with MUC20; prevents interaction with GRB2 and suppresses hepatocyte growth factor-induced cell proliferation. Interacts with GRB10. Interacts with PTPN1 and PTPN2. Interacts with HSP90AA1 and HSP90AB1; the interaction suppresses MET kinase activity. Interacts with tensin TNS3. Interacts (when phosphorylated) with tensin TNS4 (via SH2 domain); the interaction increases MET protein stability by inhibiting MET endocytosis and subsequent lysosomal degradation. In terms of processing, autophosphorylated in response to ligand binding on Tyr-1234 and Tyr-1235 in the kinase domain leading to further phosphorylation of Tyr-1349 and Tyr-1356 in the C-terminal multifunctional docking site. Dephosphorylated by PTPRJ at Tyr-1349 and Tyr-1365. Dephosphorylated by PTPN1 and PTPN2. Ubiquitinated. Ubiquitination by CBL regulates the receptor stability and activity through proteasomal degradation. Post-translationally, O-mannosylation of IPT/TIG domains by TMEM260 is required for protein maturation. O-mannosylated residues are composed of single mannose glycans that are not elongated or modified.

The protein resides in the membrane. The enzyme catalyses L-tyrosyl-[protein] + ATP = O-phospho-L-tyrosyl-[protein] + ADP + H(+). With respect to regulation, in its inactive state, the C-terminal tail interacts with the catalytic domain and inhibits the kinase activity. Upon ligand binding, the C-terminal tail is displaced and becomes phosphorylated, thus increasing the kinase activity. Its function is as follows. Receptor tyrosine kinase that transduces signals from the extracellular matrix into the cytoplasm by binding to hepatocyte growth factor/HGF ligand. Regulates many physiological processes including proliferation, scattering, morphogenesis and survival. Ligand binding at the cell surface induces autophosphorylation of MET on its intracellular domain that provides docking sites for downstream signaling molecules. Following activation by ligand, interacts with the PI3-kinase subunit PIK3R1, PLCG1, SRC, GRB2, STAT3 or the adapter GAB1. Recruitment of these downstream effectors by MET leads to the activation of several signaling cascades including the RAS-ERK, PI3 kinase-AKT, or PLCgamma-PKC. The RAS-ERK activation is associated with the morphogenetic effects while PI3K/AKT coordinates prosurvival effects. During embryonic development, MET signaling plays a role in gastrulation, development and migration of muscles and neuronal precursors, angiogenesis and kidney formation. In adults, participates in wound healing as well as organ regeneration and tissue remodeling. Also promotes differentiation and proliferation of hematopoietic cells. The protein is Hepatocyte growth factor receptor (MET) of Sus scrofa (Pig).